We begin with the raw amino-acid sequence, 477 residues long: Interferon gamma receptor 1 (477 aa).

Residues 1–25 (MGPQAAAGRMILLVVLMLSAKVGSG) form the signal peptide. Over 26 to 254 (ALTSTEDPEP…PPFHDDRKDS (229 aa)) the chain is Extracellular. N-linked (GlcNAc...) asparagine glycosylation is found at asparagine 61 and asparagine 85. Disulfide bonds link cysteine 83-cysteine 91, cysteine 128-cysteine 174, cysteine 203-cysteine 208, and cysteine 222-cysteine 243. The helical transmembrane segment at 255 to 275 (IWILVVAPLTVFTVVILVFAY) threads the bilayer. Topologically, residues 276 to 477 (WYTKKNSFKR…RLTGEAQELS (202 aa)) are cytoplasmic. Disordered regions lie at residues 335 to 386 (TVTA…LSSN) and 402 to 446 (SDSG…SGYD). Residue serine 362 is modified to Phosphoserine. Threonine 367 carries the post-translational modification Phosphothreonine. Position 370 is a phosphoserine (serine 370). Phosphothreonine occurs at positions 373 and 375. The span at 375–386 (TQRRSFSLLSSN) shows a compositional bias: polar residues. Phosphoserine is present on residues serine 379 and serine 402. Residues 402–416 (SDSGLVGSGSSISDL) are compositionally biased toward low complexity. Phosphotyrosine is present on tyrosine 445.

This sequence belongs to the type II cytokine receptor family. Monomer. Heterodimer with IFNGR2, to form the IFNG receptor complex. Interacts with JAK1. Interacts (when phosphorylated) with STAT1. Interacts with SOCS1. In terms of processing, phosphorylated at Ser/Thr residues. Phosphorylation of Tyr-445 is required for IFNG receptor signal transduction. Influenza virus infection leads to phosphorylation in a CSNK1A1-dependent manner. Ubiquitinated after phosphorylation in a CSNK1A1-dependent manner, leading to the lysosome-dependent degradation. Proteasomally degraded through 'Lys-48'-mediated ubiquitination. Ubiquitination is necessary for efficient IFNGR1 signaling.

The protein resides in the cell membrane. Functionally, receptor subunit for interferon gamma/INFG that plays crucial roles in antimicrobial, antiviral, and antitumor responses by activating effector immune cells and enhancing antigen presentation (, PubMed:20926559, PubMed:27286456). Associates with transmembrane accessory factor IFNGR2 to form a functional receptor. Upon ligand binding, the intracellular domain of IFNGR1 opens out to allow association of downstream signaling components JAK1 and JAK2. In turn, activated JAK1 phosphorylates IFNGR1 to form a docking site for STAT1. Subsequent phosphorylation of STAT1 leads to its dimerization, translocation to the nucleus, and stimulation of target gene transcription. STAT3 can also be activated in a similar manner although activation seems weaker. IFNGR1 intracellular domain phosphorylation also provides a docking site for SOCS1 that regulates the JAK-STAT pathway by competing with STAT1 binding to IFNGR1. The chain is Interferon gamma receptor 1 from Mus musculus (Mouse).